The primary structure comprises 252 residues: Geranylgeranylglyceryl phosphate synthase (252 aa).

Mg(2+) contacts are provided by D27 and T57. Sn-glycerol 1-phosphate contacts are provided by residues 175-181 (YLEAGSG), 206-207 (GG), and 228-229 (GN).

It belongs to the GGGP/HepGP synthase family. Group II subfamily. It depends on Mg(2+) as a cofactor.

It localises to the cytoplasm. The enzyme catalyses sn-glycerol 1-phosphate + (2E,6E,10E)-geranylgeranyl diphosphate = sn-3-O-(geranylgeranyl)glycerol 1-phosphate + diphosphate. Its pathway is membrane lipid metabolism; glycerophospholipid metabolism. Prenyltransferase that catalyzes the transfer of the geranylgeranyl moiety of geranylgeranyl diphosphate (GGPP) to the C3 hydroxyl of sn-glycerol-1-phosphate (G1P). This reaction is the first ether-bond-formation step in the biosynthesis of archaeal membrane lipids. The protein is Geranylgeranylglyceryl phosphate synthase of Metallosphaera sedula (strain ATCC 51363 / DSM 5348 / JCM 9185 / NBRC 15509 / TH2).